A 232-amino-acid polypeptide reads, in one-letter code: 5'-methylthioadenosine/S-adenosylhomocysteine nucleosidase (232 aa).

Glu12 acts as the Proton acceptor in catalysis. Residues Gly78, Ile152, and 173 to 174 (ME) each bind substrate. Asp197 (proton donor) is an active-site residue.

Belongs to the PNP/UDP phosphorylase family. MtnN subfamily. Homodimer.

The enzyme catalyses S-adenosyl-L-homocysteine + H2O = S-(5-deoxy-D-ribos-5-yl)-L-homocysteine + adenine. The catalysed reaction is S-methyl-5'-thioadenosine + H2O = 5-(methylsulfanyl)-D-ribose + adenine. It carries out the reaction 5'-deoxyadenosine + H2O = 5-deoxy-D-ribose + adenine. It participates in amino-acid biosynthesis; L-methionine biosynthesis via salvage pathway; S-methyl-5-thio-alpha-D-ribose 1-phosphate from S-methyl-5'-thioadenosine (hydrolase route): step 1/2. Its function is as follows. Catalyzes the irreversible cleavage of the glycosidic bond in both 5'-methylthioadenosine (MTA) and S-adenosylhomocysteine (SAH/AdoHcy) to adenine and the corresponding thioribose, 5'-methylthioribose and S-ribosylhomocysteine, respectively. Also cleaves 5'-deoxyadenosine, a toxic by-product of radical S-adenosylmethionine (SAM) enzymes, into 5-deoxyribose and adenine. Thus, is required for in vivo function of the radical SAM enzymes biotin synthase and lipoic acid synthase, that are inhibited by 5'-deoxyadenosine accumulation. The protein is 5'-methylthioadenosine/S-adenosylhomocysteine nucleosidase of Escherichia coli O7:K1 (strain IAI39 / ExPEC).